A 162-amino-acid chain; its full sequence is UPF0260 protein Caul_3920 (162 aa).

Belongs to the UPF0260 family.

The polypeptide is UPF0260 protein Caul_3920 (Caulobacter sp. (strain K31)).